A 32-amino-acid chain; its full sequence is Calcitonin-2 (32 aa).

Cys-1 and Cys-7 form a disulfide bridge. Residue Pro-32 is modified to Proline amide.

The protein belongs to the calcitonin family.

The protein resides in the secreted. Functionally, causes a rapid but short-lived drop in the level of calcium and phosphate in blood by promoting the incorporation of those ions in the bones. In Oncorhynchus gorbuscha (Pink salmon), this protein is Calcitonin-2.